The following is a 397-amino-acid chain: Elongation factor Tu (397 aa).

One can recognise a tr-type G domain in the interval 10–206; sequence KPHVNIGTIG…AVDTSIPQPE (197 aa). The tract at residues 19 to 26 is G1; that stretch reads GHIDHGKT. Residue 19-26 participates in GTP binding; that stretch reads GHIDHGKT. Thr-26 contributes to the Mg(2+) binding site. Positions 62–66 are G2; the sequence is GITIS. A G3 region spans residues 83–86; the sequence is DCPG. GTP contacts are provided by residues 83–87 and 138–141; these read DCPGH and NKSD. Residues 138–141 form a G4 region; that stretch reads NKSD. Residues 176 to 178 form a G5 region; sequence SAL.

The protein belongs to the TRAFAC class translation factor GTPase superfamily. Classic translation factor GTPase family. EF-Tu/EF-1A subfamily. In terms of assembly, monomer.

It localises to the cytoplasm. The enzyme catalyses GTP + H2O = GDP + phosphate + H(+). In terms of biological role, GTP hydrolase that promotes the GTP-dependent binding of aminoacyl-tRNA to the A-site of ribosomes during protein biosynthesis. This Salinispora tropica (strain ATCC BAA-916 / DSM 44818 / JCM 13857 / NBRC 105044 / CNB-440) protein is Elongation factor Tu.